Here is a 104-residue protein sequence, read N- to C-terminus: Turripeptide OL55 (104 aa).

Post-translationally, contains 8 disulfide bonds. As to expression, expressed by the venom duct.

The protein localises to the secreted. In terms of biological role, acts as a neurotoxin by inhibiting an ion channel. The chain is Turripeptide OL55 from Iotyrris olangoensis (Sea snail).